A 456-amino-acid chain; its full sequence is MKSVTVKQLLQTPRKFNNKQIKLSGWVKNKRASANIIFLAISDGSSINTLQAVVKQEDNPQVFSLLQTVNLASAVMVWGEIILTPKAKQPLELKLKQVSLLAQAESDYPLQKKEHSQEFFRSNAHLRVRAKTYFAVMKIRSVLSHAIFEYFFKNDFILVQSPILTSNDCEGAGETFVIKDSETFFNKTTFLTVSGQFGAEAFAQAFKKVFTFGPTFRAEKSHTNRHLSEFWMIEPEIAFANLKDLMQLIQNLIKFLIKKVMENASDELNVLAKQFSNDIISNLKTIISTKKFPIIEYSKALAILKESSDTKKTNFELNDFSFGIDLKTEHERFLCEQYFQNQPLFVINYPKELKAFYMKTNTDNKTVAAVDLLLPKIGEICGGSERESDLNQLKNRCQSLNIDTKSLNWYLDMRKWGYFASAGFGLGFDRLLAYICGLENIRDAIPFPRVHGTINF.

It belongs to the class-II aminoacyl-tRNA synthetase family. Homodimer.

It localises to the cytoplasm. It carries out the reaction tRNA(Asn) + L-asparagine + ATP = L-asparaginyl-tRNA(Asn) + AMP + diphosphate + H(+). This chain is Asparagine--tRNA ligase, found in Mycoplasma genitalium (strain ATCC 33530 / DSM 19775 / NCTC 10195 / G37) (Mycoplasmoides genitalium).